Reading from the N-terminus, the 247-residue chain is tRNA pseudouridine synthase A 1 (247 aa).

Asp-53 acts as the Nucleophile in catalysis. Tyr-111 contributes to the substrate binding site.

Belongs to the tRNA pseudouridine synthase TruA family. As to quaternary structure, homodimer.

The catalysed reaction is uridine(38/39/40) in tRNA = pseudouridine(38/39/40) in tRNA. Formation of pseudouridine at positions 38, 39 and 40 in the anticodon stem and loop of transfer RNAs. The sequence is that of tRNA pseudouridine synthase A 1 from Bacillus cereus (strain ATCC 10987 / NRS 248).